A 193-amino-acid chain; its full sequence is Probable GTP-binding protein EngB (193 aa).

One can recognise an EngB-type G domain in the interval 22–193; sequence QLPEFALAGR…EAWGALQKWM (172 aa). GTP contacts are provided by residues 30–37, 57–61, 75–78, 142–145, and 174–176; these read GRSNVGKS, GKTQT, DVPG, TKAD, and FSA. Mg(2+) is bound by residues S37 and T59.

This sequence belongs to the TRAFAC class TrmE-Era-EngA-EngB-Septin-like GTPase superfamily. EngB GTPase family. It depends on Mg(2+) as a cofactor.

Necessary for normal cell division and for the maintenance of normal septation. The sequence is that of Probable GTP-binding protein EngB from Anoxybacillus flavithermus (strain DSM 21510 / WK1).